Consider the following 216-residue polypeptide: MSKAQFLREYKLVVVGGGGVGKSALTIQFIQSHFVDEYDPTIEDSYRKQCIIDEEVALLDVLDTAGQEEYGAMREQYMRTGEGFLLVYSITSRSSFEEVSTFHQQILRVKDKDYFPVVVVANKCDLEYERQVQPHEGRDLAKRFNAQCIETSAKQRVNVDEAFIAVVRAIRRYQKESGPPQAVNAPAKSQMSAVGGRAAEKDDHVDKGCCRGCVVL.

A GTP-binding site is contributed by 16–23 (GGGGVGKS). Residues 38-46 (YDPTIEDSY) carry the Effector region motif. GTP-binding positions include 63 to 67 (DTAGQ) and 122 to 125 (NKCD). Residues C209 and C210 are each lipidated (S-palmitoyl cysteine). Cysteine methyl ester is present on C213. A lipid anchor (S-geranylgeranyl cysteine) is attached at C213. The propeptide at 214 to 216 (VVL) is removed in mature form.

It belongs to the small GTPase superfamily. Ras family.

The protein localises to the cell membrane. The catalysed reaction is GTP + H2O = GDP + phosphate + H(+). With respect to regulation, alternates between an inactive form bound to GDP and an active form bound to GTP. Activated by a guanine nucleotide-exchange factor (GEF) and inactivated by a GTPase-activating protein (GAP). This is Ras-like protein (RAS1) from Cryptococcus neoformans var. neoformans serotype D (strain B-3501A) (Filobasidiella neoformans).